A 149-amino-acid chain; its full sequence is MRAVVQRVKRSKVEVDGKIIGEIGKGLNVLLGISVEDKKEDISYMKDKILNLRIFEDEEGKLNKSLLDVQGELLIISQFTLYGDCRKGRRPSFIKALGGEKARSVYNEFIDQCKDSVHNVQTGEFGADMLVSIENDGPVTIMVDSEKIF.

The short motif at glycine 137–proline 138 is the Gly-cisPro motif, important for rejection of L-amino acids element.

It belongs to the DTD family. As to quaternary structure, homodimer.

The protein resides in the cytoplasm. The enzyme catalyses glycyl-tRNA(Ala) + H2O = tRNA(Ala) + glycine + H(+). It carries out the reaction a D-aminoacyl-tRNA + H2O = a tRNA + a D-alpha-amino acid + H(+). In terms of biological role, an aminoacyl-tRNA editing enzyme that deacylates mischarged D-aminoacyl-tRNAs. Also deacylates mischarged glycyl-tRNA(Ala), protecting cells against glycine mischarging by AlaRS. Acts via tRNA-based rather than protein-based catalysis; rejects L-amino acids rather than detecting D-amino acids in the active site. By recycling D-aminoacyl-tRNA to D-amino acids and free tRNA molecules, this enzyme counteracts the toxicity associated with the formation of D-aminoacyl-tRNA entities in vivo and helps enforce protein L-homochirality. The sequence is that of D-aminoacyl-tRNA deacylase from Clostridium kluyveri (strain ATCC 8527 / DSM 555 / NBRC 12016 / NCIMB 10680 / K1).